A 298-amino-acid polypeptide reads, in one-letter code: Arginase (298 aa).

Residues H98, D121, H123, and D125 each coordinate Mn(2+). Substrate is bound by residues 123-127 (HGDLN), 134-136 (SGN), and D177. Residues D225 and D227 each coordinate Mn(2+). Residues T239 and E270 each coordinate substrate.

Belongs to the arginase family. The cofactor is Mn(2+).

It carries out the reaction L-arginine + H2O = urea + L-ornithine. The protein operates within nitrogen metabolism; urea cycle; L-ornithine and urea from L-arginine: step 1/1. The sequence is that of Arginase (rocF) from Brevibacillus brevis (Bacillus brevis).